The following is a 294-amino-acid chain: Sperm acrosome membrane-associated protein 1 (294 aa).

The N-terminal stretch at 1–29 (MSPRGTGCSAGLLMTVGWLLLAGLQSARG) is a signal peptide. Topologically, residues 30 to 221 (TNVTAAVQDA…LPATDAALIF (192 aa)) are extracellular. N-linked (GlcNAc...) asparagine glycosylation occurs at asparagine 31. Positions 42–70 (AHEGEGEEETENNDSETAENYAPPETEDV) are disordered. Residues 46–58 (EGEEETENNDSET) show a composition bias toward acidic residues. Residues 222-242 (VLTIGVIICVFIIFLLIFIII) form a helical membrane-spanning segment. Residues 243–294 (NWAAVKAFWGAKASTPEVQSEQSSVRYKDSTSLDQLPTEMPGEDDALSEWNE) are Cytoplasmic-facing. Serine 256 is modified (phosphoserine). The span at 258-267 (PEVQSEQSSV) shows a compositional bias: polar residues. Positions 258 to 294 (PEVQSEQSSVRYKDSTSLDQLPTEMPGEDDALSEWNE) are disordered. The residue at position 269 (tyrosine 269) is a Phosphotyrosine. Positions 283-294 (PGEDDALSEWNE) are enriched in acidic residues. The residue at position 290 (serine 290) is a Phosphoserine.

Interacts with CYLC1; the interaction may be relevant for proper acrosome attachment to the nuclear envelope. N-glycosylated. In terms of tissue distribution, testis specific.

It localises to the cytoplasmic vesicle. Its subcellular location is the secretory vesicle. The protein resides in the acrosome inner membrane. Plays a role in acrosome formation and establishment of normal sperm morphology during spermatogenesis. Important for male fertility. This Homo sapiens (Human) protein is Sperm acrosome membrane-associated protein 1 (SPACA1).